A 127-amino-acid chain; its full sequence is Protein ApaG (127 aa).

The ApaG domain occupies 3–127 (KSETYRIEVE…FMLAMPRVLH (125 aa)).

This Azoarcus sp. (strain BH72) protein is Protein ApaG.